Reading from the N-terminus, the 392-residue chain is Probable tRNA sulfurtransferase (392 aa).

A THUMP domain is found at 59 to 166 (DEIIERVKKV…ECSFVFTKKV (108 aa)). ATP is bound by residues 183–184 (LL), 208–209 (HF), Arg265, Gly287, and Gln296.

Belongs to the ThiI family.

It localises to the cytoplasm. The enzyme catalyses [ThiI sulfur-carrier protein]-S-sulfanyl-L-cysteine + a uridine in tRNA + 2 reduced [2Fe-2S]-[ferredoxin] + ATP + H(+) = [ThiI sulfur-carrier protein]-L-cysteine + a 4-thiouridine in tRNA + 2 oxidized [2Fe-2S]-[ferredoxin] + AMP + diphosphate. It carries out the reaction [ThiS sulfur-carrier protein]-C-terminal Gly-Gly-AMP + S-sulfanyl-L-cysteinyl-[cysteine desulfurase] + AH2 = [ThiS sulfur-carrier protein]-C-terminal-Gly-aminoethanethioate + L-cysteinyl-[cysteine desulfurase] + A + AMP + 2 H(+). It functions in the pathway cofactor biosynthesis; thiamine diphosphate biosynthesis. Catalyzes the ATP-dependent transfer of a sulfur to tRNA to produce 4-thiouridine in position 8 of tRNAs, which functions as a near-UV photosensor. Also catalyzes the transfer of sulfur to the sulfur carrier protein ThiS, forming ThiS-thiocarboxylate. This is a step in the synthesis of thiazole, in the thiamine biosynthesis pathway. The sulfur is donated as persulfide by IscS. In Alkaliphilus metalliredigens (strain QYMF), this protein is Probable tRNA sulfurtransferase.